Reading from the N-terminus, the 296-residue chain is Large ribosomal subunit protein uL18A (296 aa).

The tract at residues 251–296 is disordered; sequence PVHEKKPKKEVKKKRWNRAKLSLEQKKDRVAQKKASFLRAQEKADS. The span at 255–268 shows a compositional bias: basic residues; the sequence is KKPKKEVKKKRWNR. Basic and acidic residues predominate over residues 271–281; sequence LSLEQKKDRVA.

Belongs to the universal ribosomal protein uL18 family. As to quaternary structure, component of the large ribosomal subunit (LSU). Part of a LSU subcomplex, the 5S RNP which is composed of the 5S RNA, RPL5 and RPL11.

It localises to the cytoplasm. It is found in the nucleus. Its subcellular location is the nucleolus. Component of the ribosome, a large ribonucleoprotein complex responsible for the synthesis of proteins in the cell. The small ribosomal subunit (SSU) binds messenger RNAs (mRNAs) and translates the encoded message by selecting cognate aminoacyl-transfer RNA (tRNA) molecules. The large subunit (LSU) contains the ribosomal catalytic site termed the peptidyl transferase center (PTC), which catalyzes the formation of peptide bonds, thereby polymerizing the amino acids delivered by tRNAs into a polypeptide chain. The nascent polypeptides leave the ribosome through a tunnel in the LSU and interact with protein factors that function in enzymatic processing, targeting, and the membrane insertion of nascent chains at the exit of the ribosomal tunnel. As part of the 5S RNP/5S ribonucleoprotein particle it is an essential component of the LSU, required for its formation and the maturation of rRNAs. It also couples ribosome biogenesis to p53/TP53 activation. As part of the 5S RNP it accumulates in the nucleoplasm and inhibits MDM2, when ribosome biogenesis is perturbed, mediating the stabilization and the activation of TP53. The polypeptide is Large ribosomal subunit protein uL18A (rpl5-a) (Xenopus laevis (African clawed frog)).